The chain runs to 332 residues: MLMTRPNLKGRSFLAEKDFTQEELLYFLDLAAELKEKKKNGIPHHYLEGKNVALLFEKTSTRTRCAFTVACTDLGANPEYLGKGDIQLGKKESVEDTAKVLGRMFDGIEFRGFNHETVESLAQNSGVPVWNGLTDMWHPTQTLADLLTIREHIGKLKNVKLVYVGDGRNNVANSLLVGGAIVGMDVRICTPESLWPAQEVIDLAKKYNEQVMITSNVEEAVANADVIYTDVWVSMGEEEKFAERVELLKPYQVNMKMIKATGNENVIFLHCLPAFHDVETMYGEEVYEKYGLKEMEVTDEVFRSKHSKVFDQAENRMHTIKAVMAATLGNME.

Residues 60–63, Q87, R111, and 138–141 each bind carbamoyl phosphate; these read STRT and HPTQ. L-ornithine-binding positions include N170, D230, and 234–235; that span reads SM. Carbamoyl phosphate is bound by residues 271 to 272 and R316; that span reads CL.

It belongs to the aspartate/ornithine carbamoyltransferase superfamily. OTCase family.

The protein localises to the cytoplasm. The catalysed reaction is carbamoyl phosphate + L-ornithine = L-citrulline + phosphate + H(+). It participates in amino-acid degradation; L-arginine degradation via ADI pathway; carbamoyl phosphate from L-arginine: step 2/2. Functionally, reversibly catalyzes the transfer of the carbamoyl group from carbamoyl phosphate (CP) to the N(epsilon) atom of ornithine (ORN) to produce L-citrulline. The sequence is that of Ornithine carbamoyltransferase, catabolic (arcB) from Bacillus cereus (strain ATCC 14579 / DSM 31 / CCUG 7414 / JCM 2152 / NBRC 15305 / NCIMB 9373 / NCTC 2599 / NRRL B-3711).